The following is a 147-amino-acid chain: D-aminoacyl-tRNA deacylase (147 aa).

Residues 136-137 carry the Gly-cisPro motif, important for rejection of L-amino acids motif; the sequence is GP.

Belongs to the DTD family. Homodimer.

It localises to the cytoplasm. The catalysed reaction is glycyl-tRNA(Ala) + H2O = tRNA(Ala) + glycine + H(+). It catalyses the reaction a D-aminoacyl-tRNA + H2O = a tRNA + a D-alpha-amino acid + H(+). An aminoacyl-tRNA editing enzyme that deacylates mischarged D-aminoacyl-tRNAs. Also deacylates mischarged glycyl-tRNA(Ala), protecting cells against glycine mischarging by AlaRS. Acts via tRNA-based rather than protein-based catalysis; rejects L-amino acids rather than detecting D-amino acids in the active site. By recycling D-aminoacyl-tRNA to D-amino acids and free tRNA molecules, this enzyme counteracts the toxicity associated with the formation of D-aminoacyl-tRNA entities in vivo and helps enforce protein L-homochirality. This chain is D-aminoacyl-tRNA deacylase, found in Streptococcus equi subsp. equi (strain 4047).